A 268-amino-acid chain; its full sequence is NADH-quinone oxidoreductase subunit B 2 (268 aa).

Positions 42, 43, 108, and 138 each coordinate [4Fe-4S] cluster. The tract at residues 237-268 (SPNKAKGVAPEIRHNDLKRPAVEVDHARDEQR) is disordered. Basic and acidic residues predominate over residues 247–268 (EIRHNDLKRPAVEVDHARDEQR).

Belongs to the complex I 20 kDa subunit family. In terms of assembly, NDH-1 is composed of 14 different subunits. Subunits NuoB, C, D, E, F, and G constitute the peripheral sector of the complex. [4Fe-4S] cluster serves as cofactor.

The protein localises to the cell membrane. The catalysed reaction is a quinone + NADH + 5 H(+)(in) = a quinol + NAD(+) + 4 H(+)(out). Functionally, NDH-1 shuttles electrons from NADH, via FMN and iron-sulfur (Fe-S) centers, to quinones in the respiratory chain. The immediate electron acceptor for the enzyme in this species is believed to be ubiquinone. Couples the redox reaction to proton translocation (for every two electrons transferred, four hydrogen ions are translocated across the cytoplasmic membrane), and thus conserves the redox energy in a proton gradient. The protein is NADH-quinone oxidoreductase subunit B 2 of Roseiflexus castenholzii (strain DSM 13941 / HLO8).